The sequence spans 255 residues: Myb-related protein Zm38 (255 aa).

HTH myb-type domains follow at residues 9 to 61 and 62 to 116; these read KAHT…INYL and RPDL…RRKL. DNA-binding regions (H-T-H motif) lie at residues 37–61 and 89–112; these read WRSL…INYL and WSLI…NTHV.

The protein resides in the nucleus. Transcription factor that negatively regulates genes involved in anthocyanin biosynthesis. This is Myb-related protein Zm38 from Zea mays (Maize).